We begin with the raw amino-acid sequence, 234 residues long: Probable transcriptional regulatory protein PFL_3960 (234 aa).

Belongs to the TACO1 family.

The protein resides in the cytoplasm. This Pseudomonas fluorescens (strain ATCC BAA-477 / NRRL B-23932 / Pf-5) protein is Probable transcriptional regulatory protein PFL_3960.